A 158-amino-acid polypeptide reads, in one-letter code: N-acetylgalactosamine-specific phosphotransferase enzyme IIB component 1 (158 aa).

The 158-residue stretch at 1-158 (MTSPNILLTR…PGDQKEQIPD (158 aa)) folds into the PTS EIIB type-4 domain. H17 functions as the Pros-phosphohistidine intermediate in the catalytic mechanism.

Its subcellular location is the cytoplasm. The phosphoenolpyruvate-dependent sugar phosphotransferase system (sugar PTS), a major carbohydrate active -transport system, catalyzes the phosphorylation of incoming sugar substrates concomitantly with their translocation across the cell membrane. This system is involved in N-acetylgalactosamine transport. The sequence is that of N-acetylgalactosamine-specific phosphotransferase enzyme IIB component 1 (agaB) from Escherichia coli (strain K12).